A 295-amino-acid chain; its full sequence is Small ribosomal subunit biogenesis GTPase RsgA (295 aa).

The CP-type G domain maps to 68–228; the sequence is KNLLVKPHVA…VVDTPGFANL (161 aa). GTP contacts are provided by residues 117–120 and 170–178; these read NKMD and GLSGVGKSS. Residues C250, C255, H257, and C263 each contribute to the Zn(2+) site.

The protein belongs to the TRAFAC class YlqF/YawG GTPase family. RsgA subfamily. As to quaternary structure, monomer. Associates with 30S ribosomal subunit, binds 16S rRNA. Zn(2+) serves as cofactor.

The protein resides in the cytoplasm. In terms of biological role, one of several proteins that assist in the late maturation steps of the functional core of the 30S ribosomal subunit. Helps release RbfA from mature subunits. May play a role in the assembly of ribosomal proteins into the subunit. Circularly permuted GTPase that catalyzes slow GTP hydrolysis, GTPase activity is stimulated by the 30S ribosomal subunit. In Thermotoga neapolitana (strain ATCC 49049 / DSM 4359 / NBRC 107923 / NS-E), this protein is Small ribosomal subunit biogenesis GTPase RsgA.